Reading from the N-terminus, the 508-residue chain is Light-independent protochlorophyllide reductase subunit B (508 aa).

A [4Fe-4S] cluster-binding site is contributed by D36. The active-site Proton donor is D294. 429 to 430 (GM) serves as a coordination point for substrate.

It belongs to the ChlB/BchB/BchZ family. In terms of assembly, protochlorophyllide reductase is composed of three subunits; ChlL, ChlN and ChlB. Forms a heterotetramer of two ChlB and two ChlN subunits. It depends on [4Fe-4S] cluster as a cofactor.

The catalysed reaction is chlorophyllide a + oxidized 2[4Fe-4S]-[ferredoxin] + 2 ADP + 2 phosphate = protochlorophyllide a + reduced 2[4Fe-4S]-[ferredoxin] + 2 ATP + 2 H2O. The protein operates within porphyrin-containing compound metabolism; chlorophyll biosynthesis (light-independent). In terms of biological role, component of the dark-operative protochlorophyllide reductase (DPOR) that uses Mg-ATP and reduced ferredoxin to reduce ring D of protochlorophyllide (Pchlide) to form chlorophyllide a (Chlide). This reaction is light-independent. The NB-protein (ChlN-ChlB) is the catalytic component of the complex. In Gloeothece citriformis (strain PCC 7424) (Cyanothece sp. (strain PCC 7424)), this protein is Light-independent protochlorophyllide reductase subunit B.